Here is a 533-residue protein sequence, read N- to C-terminus: MRARRVVAAAAVLLLFAVVAVARLDLDDDGDDSEVLDELLAVDEEEERGELGGGGEAAAAEAVRRAQSMVLVLDNDNARRAVEENAEVLLLGYAPWCERSAQLMPRFAEAAAALRAMGSAVAFAKLDGERYPKAASAVGVKGFPTVLLFVNGTEHQFTGLHTKDAIVTWVRKKTGAPASRIQSKDSAEEFLKKDQTFAVGLFKNFEGAEYEEFVKAATSENEVQFVETNDRNVAKILFPGIASEEQFLGLVKSEPEKFEKFNGAFEEKEIIQFVELNKFPLITVFTDLNSGKVYGSPIKLQVFTFAEAYDFEDLESMIQEVARGFKTKIMLIYVDTAEEKLAKPFLTLYGLEPEKPTVTAFDTSKGTKYLMEAEINAKNLQDFCLSLLEGTLPPYFRSEPVPEEKGPIEKVVGRTFDSSVLESPQNVFLEVHAPWCVDCEAISKNVEKLAKHFNDLGQTNLKFARIDASVNEHPKLQINNYPTLLLYPAQDKSNPIKLSKKSNLKDMAKFVKEKLQIADVETVAAGDIVKDEL.

Residues 1–22 form the signal peptide; it reads MRARRVVAAAAVLLLFAVVAVA. Thioredoxin domains follow at residues 51–196 and 387–516; these read LGGG…KDQT and LLEG…EKLQ. C97 acts as the Nucleophile in catalysis. N151 is a glycosylation site (N-linked (GlcNAc...) asparagine). Active-site nucleophile residues include C436 and C439. A disulfide bond links C436 and C439. Residues 530-533 carry the Prevents secretion from ER motif; that stretch reads KDEL.

This sequence belongs to the protein disulfide isomerase family.

The protein localises to the endoplasmic reticulum lumen. It catalyses the reaction Catalyzes the rearrangement of -S-S- bonds in proteins.. Functionally, acts as a protein-folding catalyst that interacts with nascent polypeptides to catalyze the formation, isomerization, and reduction or oxidation of disulfide bonds. May play a role in storage protein biogenesis. The protein is Protein disulfide isomerase-like 1-5 (PDIL1-5) of Oryza sativa subsp. japonica (Rice).